A 30-amino-acid polypeptide reads, in one-letter code: Beta/omega-theraphotoxin-Tp2a (30 aa).

3 disulfide bridges follow: cysteine 2/cysteine 16, cysteine 9/cysteine 21, and cysteine 15/cysteine 25. The interval lysine 26 to tryptophan 30 is flexible tail region important for ability to inhibit Nav channel. The hydrophobic dyad that anchors the toxin into the membrane while positioning it over the S3 helix of Nav1.7/SCN9A stretch occupies residues leucine 29 to tryptophan 30.

It belongs to the neurotoxin 30 (phrixotoxin) family. In terms of tissue distribution, expressed by the venom gland.

It is found in the secreted. In terms of biological role, gating-modifier toxin that targets voltage-gated sodium channels with a selective activity on Nav1.7/SCN9A (IC(50)=1-1.5 nM). It inhibits both activation and inactivation. For inhibition of activation, it is 100-fold more selective for Nav1.7/SCN9A (IC(50)=0.26-3) than for other sodium channels (Nav1.2/SCN2A (IC(50)=40-540 nM), Nav1.3/SCN3A (IC(50)=102 nM), Nav1.4/SCN4A (IC(50)=30-39 nM), Nav1.5/SCN5A (IC(50)=19-90 nM), Nav1.6/SCN8A (IC(50)=26 nM), and Nav1.8/SCN10A (IC(50)=146 nM)). For inhibition of inactivation, it is 20-fold more potent in inhibiting inactivation on Nav1.7/SCN9A (IC(50)=250 nM) than other channels (about 4.6 uM for all channels). It also weakly inhibits Cav1.2/CACNA1C and Cav3.2/CACNA1H (29% block at 1 uM). It inhibits Nav1.7/SCN9A activation by interacting with DII and impairs Nav1.7/SCN9A inactivation by interacting with DIV. It docks on top of the DII S3 helix Nav1.7/SCN9A. It is about 60-fold less active on Nav1.7/SCN9A at depolarized potential (0 mV; IC(50)=15 nM), compared to -120 mV potential (IC(50)=0.26 nM). This toxin binds to lipid membrane. This ability correlates with hNav1.7/SCN9A inhibition, showing that membrane binding is the first step in the inhibitory mechanism of this toxin. It inhibits Nav1.2/SCN2A less potently when it is coexpressed with SCN2B or SCN4B than when it is expressed alone, showing that beta subunits (SCN2B and SCN4B) have a protective effect. This is Beta/omega-theraphotoxin-Tp2a from Thrixopelma pruriens (Peruvian green velvet tarantula).